The chain runs to 429 residues: Enolase (429 aa).

Residue Gln-163 participates in (2R)-2-phosphoglycerate binding. Catalysis depends on Glu-205, which acts as the Proton donor. The Mg(2+) site is built by Asp-242, Glu-285, and Asp-312. Residues Lys-337, Arg-366, Ser-367, and Lys-388 each coordinate (2R)-2-phosphoglycerate. The active-site Proton acceptor is Lys-337.

The protein belongs to the enolase family. Mg(2+) is required as a cofactor.

The protein resides in the cytoplasm. Its subcellular location is the secreted. The protein localises to the cell surface. It carries out the reaction (2R)-2-phosphoglycerate = phosphoenolpyruvate + H2O. Its pathway is carbohydrate degradation; glycolysis; pyruvate from D-glyceraldehyde 3-phosphate: step 4/5. Catalyzes the reversible conversion of 2-phosphoglycerate (2-PG) into phosphoenolpyruvate (PEP). It is essential for the degradation of carbohydrates via glycolysis. This chain is Enolase, found in Aromatoleum aromaticum (strain DSM 19018 / LMG 30748 / EbN1) (Azoarcus sp. (strain EbN1)).